The following is a 738-amino-acid chain: Ent-kaurene synthase-like 1 (738 aa).

Aspartate 487, aspartate 491, asparagine 631, aspartate 632, and glutamate 639 together coordinate Mg(2+). A DDXXD motif motif is present at residues 487-491 (DDFFD).

Belongs to the terpene synthase family. Mg(2+) is required as a cofactor.

It carries out the reaction ent-copalyl diphosphate = ent-kaur-16-ene + diphosphate. The protein operates within secondary metabolite biosynthesis; terpenoid biosynthesis. Functionally, diterpene cyclase involved in the biosynthesis of labdane-related diterpenoids (LRDs) natural products. Catalyzes the cyclization of ent-CDP into ent-kaurene. This Ricinus communis (Castor bean) protein is Ent-kaurene synthase-like 1.